A 268-amino-acid polypeptide reads, in one-letter code: Fibroblast growth factor 8 (268 aa).

The signal sequence occupies residues 1–22; that stretch reads MGSPRSALSCLLLHLLVLCLQA. Residue Q23 is modified to Pyrrolidone carboxylic acid. Residues 29–87 form a disordered region; sequence QKRGPGAGNPADTLGQGHEDRPFGQRSRAGKNFTNPAPNYPEEGSKEQRDSVLPKVTQR. N60 is a glycosylation site (N-linked (GlcNAc...) asparagine). Positions 71-80 are enriched in basic and acidic residues; sequence EGSKEQRDSV. N-linked (GlcNAc...) asparagine glycosylation is present at N190.

Belongs to the heparin-binding growth factors family. Monomer. Homodimer. Interacts with FGFR1, FGFR2, FGFR3 and FGFR4. Affinity between fibroblast growth factors (FGFs) and their receptors is increased by heparan sulfate glycosaminoglycans that function as coreceptors. Post-translationally, the N-terminus is blocked. In terms of tissue distribution, absent in normal mammary glands and detected only in adult testis and ovary and in midgestational embryos.

Its subcellular location is the secreted. Functionally, plays an important role in the regulation of embryonic development, cell proliferation, cell differentiation and cell migration. Required for normal brain, eye, ear and limb development during embryogenesis. Required for normal development of the gonadotropin-releasing hormone (GnRH) neuronal system. Plays a role in neurite outgrowth in hippocampal cells. Cooperates with Wnt-1 in mouse mammary tumor virus-induced murine mammary tumorigenesis. This Mus musculus (Mouse) protein is Fibroblast growth factor 8 (Fgf8).